We begin with the raw amino-acid sequence, 355 residues long: Sorbitol dehydrogenase (355 aa).

A2 is modified (N-acetylalanine). Residue C43 coordinates Zn(2+). Residue Y49 coordinates substrate. Residues H68 and E69 each coordinate Zn(2+). E154 is a binding site for substrate. Residues I182, D202, R207, V271–L273, and I295–R297 each bind NAD(+). Residues R297 and Y298 each coordinate substrate.

Belongs to the zinc-containing alcohol dehydrogenase family. Homotetramer. Requires Zn(2+) as cofactor. As to expression, expressed in liver.

It localises to the mitochondrion membrane. It is found in the cell projection. Its subcellular location is the cilium. The protein resides in the flagellum. It carries out the reaction keto-D-fructose + NADH + H(+) = D-sorbitol + NAD(+). In terms of biological role, polyol dehydrogenase that catalyzes the reversible NAD(+)-dependent oxidation of various sugar alcohols. Is active with D-sorbitol (D-glucitol) as substrate, leading to the C2-oxidized product D-fructose. Is a key enzyme in the polyol pathway that interconverts glucose and fructose via sorbitol, which constitutes an important alternate route for glucose metabolism. In Gallus gallus (Chicken), this protein is Sorbitol dehydrogenase (SORD).